A 541-amino-acid polypeptide reads, in one-letter code: DNA polymerase epsilon subunit B (541 aa).

It belongs to the DNA polymerase epsilon subunit B family. As to quaternary structure, heterotetramer. Consists of four subunits: POL2, DPB2, DPB3 and DPB4.

It is found in the nucleus. Its function is as follows. As accessory component of the DNA polymerase epsilon (DNA polymerase II) participates in chromosomal DNA replication. This Cryptococcus neoformans var. neoformans serotype D (strain B-3501A) (Filobasidiella neoformans) protein is DNA polymerase epsilon subunit B (DPB2).